A 375-amino-acid chain; its full sequence is Period circadian protein (375 aa).

3 disordered regions span residues 27 to 119, 140 to 189, and 219 to 255; these read VTAP…VPPV, KHRE…WEGE, and KCQASGAGGGGSGSVGGTGNIGSGGSNAQPSTNQYTQ. Residues 69-91 are compositionally biased toward low complexity; sequence SGNFTTGSNLHMSSVTNTSNAGT. Gly residues predominate over residues 92 to 113; sequence GTSGTGNSGGGGGGGGGAGPGN. The segment covering 145–156 has biased composition (basic and acidic residues); sequence RGRSGEKNKKSA. Residues 224–243 are compositionally biased toward gly residues; it reads GAGGGGSGSVGGTGNIGSGG. Polar residues predominate over residues 245 to 255; sequence NAQPSTNQYTQ.

Forms a heterodimer with timeless (TIM); the complex then translocates into the nucleus. Post-translationally, phosphorylated with a circadian rhythmicity, probably by the double-time protein (dbt). Phosphorylation could be implicated in the stability of per monomer and in the formation of heterodimer per-tim.

Its subcellular location is the nucleus. The protein localises to the cytoplasm. The protein resides in the perinuclear region. Its function is as follows. Essential for biological clock functions. Determines the period length of circadian and ultradian rhythms; an increase in PER dosage leads to shortened circadian rhythms and a decrease leads to lengthened circadian rhythms. Essential for the circadian rhythmicity of locomotor activity, eclosion behavior, and for the rhythmic component of the male courtship song that originates in the thoracic nervous system. The biological cycle depends on the rhythmic formation and nuclear localization of the TIM-PER complex. Light induces the degradation of TIM, which promotes elimination of PER. Nuclear activity of the heterodimer coordinatively regulates PER and TIM transcription through a negative feedback loop. Behaves as a negative element in circadian transcriptional loop. Does not appear to bind DNA, suggesting indirect transcriptional inhibition. The protein is Period circadian protein (per) of Drosophila sucinea (Fruit fly).